The following is a 208-amino-acid chain: Large ribosomal subunit protein uL3 (208 aa).

Residues 134-159 form a disordered region; sequence SKFHREAGSTGHCTTPGRSFKNTTMP. A compositionally biased stretch (polar residues) spans 144 to 158; it reads GHCTTPGRSFKNTTM.

Belongs to the universal ribosomal protein uL3 family. As to quaternary structure, part of the 50S ribosomal subunit. Forms a cluster with proteins L14 and L19.

Its function is as follows. One of the primary rRNA binding proteins, it binds directly near the 3'-end of the 23S rRNA, where it nucleates assembly of the 50S subunit. This Treponema denticola (strain ATCC 35405 / DSM 14222 / CIP 103919 / JCM 8153 / KCTC 15104) protein is Large ribosomal subunit protein uL3.